Reading from the N-terminus, the 242-residue chain is Transcriptional regulatory protein btr (242 aa).

In terms of domain architecture, HTH crp-type spans 158-231 (MRSEQRLAAF…QREVRLIDLP (74 aa)). The H-T-H motif DNA-binding region spans 191–210 (REEIGNYLGLTLETVSRLFS).

Its function is as follows. May regulate gene expression in response to changes in oxygen levels or to changes in the redox potential of the bacterial environment. This is Transcriptional regulatory protein btr (btr) from Bordetella pertussis (strain Tohama I / ATCC BAA-589 / NCTC 13251).